A 648-amino-acid polypeptide reads, in one-letter code: Siderophore transporter MYCGRDRAFT_70577 (648 aa).

Basic and acidic residues-rich tracts occupy residues 1–11 (MRTSSESHSRS) and 29–46 (SASK…DTSI). The tract at residues 1 to 58 (MRTSSESHSRSDAFNGKNDASQVTVDSDSASKDHHDHDHHHKDTSINERQSQHVHQQA) is disordered. A compositionally biased stretch (polar residues) spans 47–58 (NERQSQHVHQQA). The next 11 membrane-spanning stretches (helical) occupy residues 79 to 99 (LLLY…ALDQ), 151 to 171 (VVVL…QGLA), 205 to 225 (AFWS…NGFI), 236 to 256 (WGLG…IWTL), 303 to 323 (LIGL…LNLA), 336 to 356 (IAML…EALL), 409 to 429 (TIFI…GGLI), 438 to 458 (TLMV…LDGN), 468 to 488 (LAVS…ARVG), 500 to 520 (VVIS…STIA), and 578 to 598 (GIIL…SCLM).

Belongs to the major facilitator superfamily.

It is found in the cell membrane. Functionally, siderophore transporter; part of the gene cluster 14 that mediates the biosynthesis of a ferrichrome A-like siderophors which may contribute to organismal virulence. This chain is Siderophore transporter MYCGRDRAFT_70577, found in Zymoseptoria tritici (strain CBS 115943 / IPO323) (Speckled leaf blotch fungus).